Here is a 109-residue protein sequence, read N- to C-terminus: MSDKIIHLTDDSFDTDVLKADGAILVDFWAEWCGPCKMIAPILDEIADEYQGKLTVAKLNIDQNPGTAPKYGIRGIPTLLLFKNGEVAATKVGALSKGQLKEFLDANLA.

Residues 2–109 (SDKIIHLTDD…LKEFLDANLA (108 aa)) form the Thioredoxin domain. Catalysis depends on nucleophile residues C33 and C36. C33 and C36 are joined by a disulfide. K70 carries the N6-acetyllysine modification.

The protein belongs to the thioredoxin family. As to quaternary structure, monomer.

Participates in various redox reactions through the reversible oxidation of its active center dithiol to a disulfide and catalyzes dithiol-disulfide exchange reactions. The polypeptide is Thioredoxin 1 (trxA) (Escherichia coli O157:H7).